We begin with the raw amino-acid sequence, 249 residues long: Triosephosphate isomerase (249 aa).

11-13 (NWK) contributes to the substrate binding site. The active-site Electrophile is His91. Glu163 (proton acceptor) is an active-site residue. Substrate contacts are provided by residues Gly169, Ser208, and 229–230 (GG).

It belongs to the triosephosphate isomerase family. Homodimer.

It is found in the cytoplasm. The enzyme catalyses D-glyceraldehyde 3-phosphate = dihydroxyacetone phosphate. Its pathway is carbohydrate biosynthesis; gluconeogenesis. It functions in the pathway carbohydrate degradation; glycolysis; D-glyceraldehyde 3-phosphate from glycerone phosphate: step 1/1. Involved in the gluconeogenesis. Catalyzes stereospecifically the conversion of dihydroxyacetone phosphate (DHAP) to D-glyceraldehyde-3-phosphate (G3P). The sequence is that of Triosephosphate isomerase from Pseudoalteromonas translucida (strain TAC 125).